The primary structure comprises 137 residues: Fluoride-specific ion channel FluC 2 (137 aa).

4 helical membrane-spanning segments follow: residues 3 to 23 (MGGS…SVLG), 44 to 64 (WGTM…GALA), 76 to 96 (PWLF…SFSL), and 111 to 131 (LGNV…GFLL). Positions 86 and 89 each coordinate Na(+).

This sequence belongs to the fluoride channel Fluc/FEX (TC 1.A.43) family.

It is found in the cell inner membrane. The catalysed reaction is fluoride(in) = fluoride(out). With respect to regulation, na(+) is not transported, but it plays an essential structural role and its presence is essential for fluoride channel function. Its function is as follows. Fluoride-specific ion channel. Important for reducing fluoride concentration in the cell, thus reducing its toxicity. This Bradyrhizobium diazoefficiens (strain JCM 10833 / BCRC 13528 / IAM 13628 / NBRC 14792 / USDA 110) protein is Fluoride-specific ion channel FluC 2.